Consider the following 390-residue polypeptide: 3-ketoacyl-CoA thiolase (390 aa).

Cysteine 95 acts as the Acyl-thioester intermediate in catalysis. Catalysis depends on proton acceptor residues histidine 346 and cysteine 376.

This sequence belongs to the thiolase-like superfamily. Thiolase family. Heterotetramer of two alpha chains (FadB) and two beta chains (FadA).

The protein resides in the cytoplasm. It catalyses the reaction an acyl-CoA + acetyl-CoA = a 3-oxoacyl-CoA + CoA. It participates in lipid metabolism; fatty acid beta-oxidation. Functionally, catalyzes the final step of fatty acid oxidation in which acetyl-CoA is released and the CoA ester of a fatty acid two carbons shorter is formed. This Psychrobacter arcticus (strain DSM 17307 / VKM B-2377 / 273-4) protein is 3-ketoacyl-CoA thiolase.